Consider the following 182-residue polypeptide: ATP synthase subunit delta (182 aa).

Belongs to the ATPase delta chain family. As to quaternary structure, F-type ATPases have 2 components, F(1) - the catalytic core - and F(0) - the membrane proton channel. F(1) has five subunits: alpha(3), beta(3), gamma(1), delta(1), epsilon(1). F(0) has three main subunits: a(1), b(2) and c(10-14). The alpha and beta chains form an alternating ring which encloses part of the gamma chain. F(1) is attached to F(0) by a central stalk formed by the gamma and epsilon chains, while a peripheral stalk is formed by the delta and b chains.

It is found in the cell membrane. Functionally, f(1)F(0) ATP synthase produces ATP from ADP in the presence of a proton or sodium gradient. F-type ATPases consist of two structural domains, F(1) containing the extramembraneous catalytic core and F(0) containing the membrane proton channel, linked together by a central stalk and a peripheral stalk. During catalysis, ATP synthesis in the catalytic domain of F(1) is coupled via a rotary mechanism of the central stalk subunits to proton translocation. In terms of biological role, this protein is part of the stalk that links CF(0) to CF(1). It either transmits conformational changes from CF(0) to CF(1) or is implicated in proton conduction. The protein is ATP synthase subunit delta of Alkalihalophilus pseudofirmus (strain ATCC BAA-2126 / JCM 17055 / OF4) (Bacillus pseudofirmus).